The chain runs to 204 residues: LexA repressor (204 aa).

The H-T-H motif DNA-binding region spans 28–48; the sequence is RAEIANRLGFKSANAAEEHLK. Catalysis depends on for autocatalytic cleavage activity residues Ser121 and Lys158.

It belongs to the peptidase S24 family. As to quaternary structure, homodimer.

It catalyses the reaction Hydrolysis of Ala-|-Gly bond in repressor LexA.. Represses a number of genes involved in the response to DNA damage (SOS response), including recA and lexA. In the presence of single-stranded DNA, RecA interacts with LexA causing an autocatalytic cleavage which disrupts the DNA-binding part of LexA, leading to derepression of the SOS regulon and eventually DNA repair. The protein is LexA repressor of Shewanella frigidimarina (strain NCIMB 400).